The primary structure comprises 209 residues: Bcl-2 homologous antagonist/killer (209 aa).

Residues 1-28 (MASGQGPGPPKVGCDESPSPSEQQVAQD) are disordered. Alanine 2 is subject to N-acetylalanine. Positions 18–27 (PSPSEQQVAQ) are enriched in polar residues. A BH3 motif is present at residues 72 to 86 (VGRQLALIGDDINRR). Positions 115-134 (SLFKSGISWGRVVALLGFGY) match the BH1 motif. Zn(2+) is bound by residues aspartate 158 and histidine 162. The short motif at 167–182 (RWIAQRGGWVAALNFR) is the BH2 element. Residues 186–203 (ILTVMVIFGVVLLGQFVV) traverse the membrane as a helical segment.

This sequence belongs to the Bcl-2 family. Homodimer. Formation of the homodimer is zinc-dependent. Forms heterodimers with BCL2 and BCL2L1 isoform Bcl-X(L). Forms heterooligomers with BAX. Interacts with BCL2A1. Interacts withRTL10/BOP. Interacts with VDAC1. Interacts with GIMAP3/IAN4 and GIMAP5/IAN5. In terms of assembly, (Microbial infection) Interacts with gamma-herpesvirus 68 protein vBCL2. As to expression, widely expressed.

The protein resides in the mitochondrion outer membrane. Its function is as follows. In the presence of an appropriate stimulus, accelerates programmed cell death by binding to, and antagonizing the anti-apoptotic action of BCL2. In Mus musculus (Mouse), this protein is Bcl-2 homologous antagonist/killer (Bak1).